A 561-amino-acid chain; its full sequence is Protein NRT1/ PTR FAMILY 5.13 (561 aa).

A helical membrane pass occupies residues 78–98; that stretch reads AWSGISTILPLLGAFVADAFL. Threonine 103 bears the Phosphothreonine mark. 10 consecutive transmembrane segments (helical) span residues 104–124, 133–153, 183–203, 211–231, 324–344, 361–381, 405–425, 447–467, 486–506, and 530–550; these read IIIASFIYVLGLAFLTLSAFL, SSPSSFLNALFFFSLYLVAIG, FFNWWYLSMCAGIGLAILVVV, WALGFGIPCVFMVISLVLFVL, IPVWLTTLAYAIPFAQYMTFF, IPPASLQVLISISIVLFVPIY, IGTGMVLATLTMVVAALVESK, IWWLFPQYMLLGLADVHTLVG, AIYLSAMGVGSLLSSLLIYLI, and YFYWLLAVVSAVGFFTFLFIS.

It belongs to the major facilitator superfamily. Proton-dependent oligopeptide transporter (POT/PTR) (TC 2.A.17) family. As to expression, expressed in roots, flowers and siliques. Detected in stems and leaves.

It localises to the membrane. This is Protein NRT1/ PTR FAMILY 5.13 (NPF5.13) from Arabidopsis thaliana (Mouse-ear cress).